A 358-amino-acid chain; its full sequence is Uroporphyrinogen decarboxylase (358 aa).

Substrate is bound by residues 29 to 33, Phe-48, Asp-79, Tyr-155, Ser-210, and His-330; that span reads RQAGR.

This sequence belongs to the uroporphyrinogen decarboxylase family. Homodimer.

It is found in the cytoplasm. The enzyme catalyses uroporphyrinogen III + 4 H(+) = coproporphyrinogen III + 4 CO2. The protein operates within porphyrin-containing compound metabolism; protoporphyrin-IX biosynthesis; coproporphyrinogen-III from 5-aminolevulinate: step 4/4. In terms of biological role, catalyzes the decarboxylation of four acetate groups of uroporphyrinogen-III to yield coproporphyrinogen-III. The sequence is that of Uroporphyrinogen decarboxylase from Bordetella bronchiseptica (strain ATCC BAA-588 / NCTC 13252 / RB50) (Alcaligenes bronchisepticus).